A 149-amino-acid polypeptide reads, in one-letter code: Large ribosomal subunit protein bL9 (149 aa).

It belongs to the bacterial ribosomal protein bL9 family.

Its function is as follows. Binds to the 23S rRNA. This chain is Large ribosomal subunit protein bL9, found in Helicobacter pylori (strain J99 / ATCC 700824) (Campylobacter pylori J99).